We begin with the raw amino-acid sequence, 106 residues long: UPF0145 protein TM_0763 (106 aa).

Belongs to the UPF0145 family.

The sequence is that of UPF0145 protein TM_0763 from Thermotoga maritima (strain ATCC 43589 / DSM 3109 / JCM 10099 / NBRC 100826 / MSB8).